The chain runs to 266 residues: 4-hydroxy-tetrahydrodipicolinate reductase (266 aa).

10 to 15 (GPRGRM) contributes to the NAD(+) binding site. Lysine 38 provides a ligand contact to NADP(+). NAD(+) contacts are provided by residues 99–101 (GTT) and 125–128 (APNF). Histidine 155 serves as the catalytic Proton donor/acceptor. Histidine 156 serves as a coordination point for (S)-2,3,4,5-tetrahydrodipicolinate. Lysine 159 (proton donor) is an active-site residue. Position 165-166 (165-166 (GT)) interacts with (S)-2,3,4,5-tetrahydrodipicolinate.

It belongs to the DapB family.

The protein localises to the cytoplasm. It carries out the reaction (S)-2,3,4,5-tetrahydrodipicolinate + NAD(+) + H2O = (2S,4S)-4-hydroxy-2,3,4,5-tetrahydrodipicolinate + NADH + H(+). It catalyses the reaction (S)-2,3,4,5-tetrahydrodipicolinate + NADP(+) + H2O = (2S,4S)-4-hydroxy-2,3,4,5-tetrahydrodipicolinate + NADPH + H(+). It functions in the pathway amino-acid biosynthesis; L-lysine biosynthesis via DAP pathway; (S)-tetrahydrodipicolinate from L-aspartate: step 4/4. Catalyzes the conversion of 4-hydroxy-tetrahydrodipicolinate (HTPA) to tetrahydrodipicolinate. In Bacillus anthracis (strain A0248), this protein is 4-hydroxy-tetrahydrodipicolinate reductase.